Reading from the N-terminus, the 362-residue chain is 3-dehydroquinate synthase (362 aa).

Residues 70–75 (DGEKYK), 104–108 (GVIGD), 128–129 (TT), Lys-141, Lys-150, and 168–171 (TLNT) each bind NAD(+). Positions 183, 246, and 263 each coordinate Zn(2+).

The protein belongs to the sugar phosphate cyclases superfamily. Dehydroquinate synthase family. It depends on NAD(+) as a cofactor. Co(2+) serves as cofactor. Zn(2+) is required as a cofactor.

The protein localises to the cytoplasm. It carries out the reaction 7-phospho-2-dehydro-3-deoxy-D-arabino-heptonate = 3-dehydroquinate + phosphate. The protein operates within metabolic intermediate biosynthesis; chorismate biosynthesis; chorismate from D-erythrose 4-phosphate and phosphoenolpyruvate: step 2/7. In terms of biological role, catalyzes the conversion of 3-deoxy-D-arabino-heptulosonate 7-phosphate (DAHP) to dehydroquinate (DHQ). The polypeptide is 3-dehydroquinate synthase (Haemophilus influenzae (strain ATCC 51907 / DSM 11121 / KW20 / Rd)).